We begin with the raw amino-acid sequence, 1883 residues long: MEDAQEQRESSQAELAKKHPLTPLKELPEESEEEEEEEDESSAGALRESDSNNSIMGKMKMRVSSILPASLSGWFSPSSKDGNDALSSPANLRQSQPRQSNGRLTTKRKRGRRRIMLAEVDADAADDLDDGSDAKGLNYEEVALADNIAEHDLAAEDEQTRRSEYNVFLLRKRAGAVAAAGGDEDEAEEDELEEDDEDGDEEDDDEEQENLQQSAAVQTKRRRLELETPVNLPNMRRLPLLSSTPAAPLAAATSSSSSQMYKGVSHIAPHRRNHLNLYGSQRQREPAYNFFTGNEAAEGSTGDLPHSIRRSLNIPFGGSSTATSYNNSLSSLPNHKRPSLIGKQTHRRDLTMDETGTGPAMSSEEHLNHLLRISRTNNNTSNNNNNNNNNNNVIETKTRRSELSAAAGGCGDSQSESDMNEYHDNGEGHDGLRPSHYNSNSNLEFYGNLQSSKSIFNRSNTAAQQSHRNSTWSLNSLTQRRRFNASIYGSTSALSDSRLLSGSASNSGSASASSSPFYQGRTTFGGNSGNNRLFSRSNLSSSAASSMLGLNSAGSSPAHQLHASMTGGIGYGMKAVDMRPSDSGSLAETSVGQGGSKKPGTGLSNTTMRILNLLESYSTPLIDAKRMGSSIKEHQSSRQQRQGTPATPYLRSTSASRNVSVPNHINELAELRSNKLLVPTMQQLLERRRLHRVTQNSRDVVHSQNVRAGGENNQEKPKPTAPYVAPIDQSANHTQHTNKMRSRLSHQTRNKETRTAEEEAPPPLDLPQISFPDMASAPKFDLIIKPTVPVVSKPSTTDPIQSSKSSNTNLSTTNSKQMPNFLANPQPAAPIVNFAANGNVSAISKPSKRTFTFSEPTPLSNFQENCIPKPKINRKYTFSAPAPLDDLRITNKQSQPTINGTPSSKEWECDTCMVRNKPEINKCVACETAKPVASAAPVQAPLPPSTAAIDTQSFVGFGDRFKKSTTAWECDACMLSNKAEASKCIACETPRKTVAPKVNNFSPLITNAKSNEWECSVCLVRNKVEVSKCVACESAKPGATMALPATSNIAVATPSIITDGFGDRFKKSATAWECDACMLSNKAEASKCIACETPRKSSTPIANSSYPSINNNLPAGSGFDISFTRKANMWECQTCLVMNKSSDEECIACQTPNSQARNSNSESALISSISSSSASFSGSLSRPSSRSSSGSTSTCGSVCSGSIVSISSTTESAKALSAKKVPPKPDAGFQQLVAAQKTSTWECEACLAKNDMSRKTCICCEQMMPEAFNPAATTANSAASSVPKFRFGFSHVKEVVKPSVETTTTPAPTSAQFSFGFGQSNQGKDVADSKKTEAPKTFMFGVSKVEEPKTVSFGTGIKETTATSSTEATAPTPAAAAPAPVQFVFKAPTTATTASSLTTTISTTSNAPALGGFSFGAPSSSSTVSSSTTSTSANPAAVKPMFSWSGAGSAVSSTSSSQQPVAKAPTLGFGVSSSTVTTTTTSTKVFAFTPASGLDPAAATSAPAAGAGFSFGSQSKPATTQNTGTFFFGQPTAVAPATPTNPSVSSIFGAPATSTTASTSVSATTSTSTANAIASSFAPTSTPQLFGNWGEKKTDLTTFGASSGSGTTTTPSFGWSSNGDAAKSNSAAVGSAAVPSSSASTMATPIFGSSSMFGPSSSSNNTTSTSTTSLPFGSAATTAATTPAGGNAALTGLFGNVGNSLAGVGAPVATTPAATAAAPLTNIFGNPTPVAAAAPVFGSGSTIPSAGFGAPAAAAPLAAPALPGAFNFGGATAATPAASSAPFVFGSSTNEPLAKPSFNFTGSAASSTAPAPAFNFTANTAATNNPSGGDSTPNANALFQFSATSTAPANIFAFNPPAAGNSAQSSQTARRKIRAPVRRLPPR.

Residues methionine 1–lysine 17 show a composition bias toward basic and acidic residues. Disordered stretches follow at residues methionine 1–glycine 57, serine 70–methionine 116, alanine 176–glutamate 227, arginine 400–serine 439, arginine 498–tyrosine 518, proline 580–serine 604, methionine 627–arginine 657, threonine 694–isoleucine 769, and valine 791–threonine 812. Over residues glutamate 29–serine 41 the composition is skewed to acidic residues. Polar residues predominate over residues glycine 73–asparagine 101. Residues threonine 105–isoleucine 115 are compositionally biased toward basic residues. The segment covering glycine 182–glutamate 209 has biased composition (acidic residues). Basic and acidic residues predominate over residues asparagine 420 to arginine 433. Over residues arginine 498–serine 515 the composition is skewed to low complexity. A compositionally biased stretch (polar residues) spans aspartate 582–valine 591. Basic and acidic residues predominate over residues methionine 627–serine 636. Polar residues-rich tracts occupy residues serine 637–arginine 657 and threonine 694–valine 706. Residues histidine 736–threonine 748 show a composition bias toward basic residues. A compositionally biased stretch (low complexity) spans serine 802–threonine 812. 5 RanBP2-type zinc fingers span residues serine 903–valine 932, lysine 962–threonine 993, lysine 1009–glycine 1038, lysine 1067–serine 1097, and lysine 1126–glutamine 1155. Zn(2+)-binding residues include cysteine 909, cysteine 912, cysteine 923, cysteine 926, cysteine 970, cysteine 973, cysteine 984, cysteine 987, cysteine 1015, cysteine 1018, cysteine 1029, cysteine 1032, cysteine 1074, cysteine 1077, cysteine 1088, and cysteine 1091. Positions serine 1173 to serine 1197 are disordered. The RanBP2-type 6 zinc finger occupies lysine 1237–glutamate 1266. A run of 22 repeats spans residues phenylalanine 1287–glycine 1288, phenylalanine 1315–glycine 1316, phenylalanine 1317–glycine 1318, phenylalanine 1340–glycine 1341, phenylalanine 1353–glycine 1354, phenylalanine 1415–glycine 1416, phenylalanine 1469–glycine 1470, phenylalanine 1511–glycine 1512, phenylalanine 1528–glycine 1529, phenylalanine 1548–glycine 1549, phenylalanine 1586–glycine 1587, phenylalanine 1599–glycine 1600, phenylalanine 1613–glycine 1614, phenylalanine 1647–glycine 1648, phenylalanine 1653–glycine 1654, phenylalanine 1672–glycine 1673, phenylalanine 1694–glycine 1695, phenylalanine 1724–glycine 1725, phenylalanine 1737–glycine 1738, phenylalanine 1748–glycine 1749, phenylalanine 1768–glycine 1769, and phenylalanine 1785–glycine 1786. The tract at residues phenylalanine 1287–glycine 1786 is 22 X 2 AA repeats of F-G. The segment covering glutamate 1301–glycine 1323 has biased composition (polar residues). The interval glutamate 1301–lysine 1331 is disordered. The disordered stretch occupies residues serine 1449–serine 1473. Positions threonine 1597–serine 1616 are disordered. Residues asparagine 1855–arginine 1883 form a disordered region. Positions alanine 1869 to arginine 1883 are enriched in basic residues.

This sequence belongs to the NUP153 family. As to quaternary structure, part of the nuclear pore complex (NPC). Associates with male-specific lethal (MSL) histone acetyltransferase complex. Requires Zn(2+) as cofactor. In terms of tissue distribution, expressed in adult male accessory glands (at protein level).

Its subcellular location is the nucleus. The protein localises to the nucleus membrane. It localises to the nuclear pore complex. It is found in the chromosome. The protein resides in the cytoplasm. Its subcellular location is the cytoskeleton. The protein localises to the spindle. Functionally, component of the nuclear pore complex (NPC), a complex required for the trafficking across the nuclear envelope. Functions as a scaffolding element in the nuclear phase of the NPC. Essential for the nuclear import of nuclear localization signal (NLS)-containing proteins in a Importin alpha/Importin beta receptor-dependent manner. Required for nuclear import of Mad. Plays a role in chromosomal organization and gene expression regulation; stimulates transcription by promoting the formation of an open chromatin environment. Binds chromatin to nucleoporin-associated regions (NARs) that define transcriptionally active regions of the genome. Associates with extended chromosomal regions that alternate between domains of high density binding with those of low occupancy. Preferentially binds to NARs of the male X chromosome. In males, together with Mgtor, required for the localization of the male-specific lethal (MSL) histone acetyltransferase complex to the X chromosome and therefore for the transcription of dosage compensation genes. May play a role in double strand break DNA repair. In Drosophila melanogaster (Fruit fly), this protein is Nuclear pore complex protein Nup153 (Nup153).